We begin with the raw amino-acid sequence, 105 residues long: Nucleoid-associated protein Ccur92_18190 (105 aa).

Belongs to the YbaB/EbfC family. As to quaternary structure, homodimer.

Its subcellular location is the cytoplasm. It is found in the nucleoid. Functionally, binds to DNA and alters its conformation. May be involved in regulation of gene expression, nucleoid organization and DNA protection. The polypeptide is Nucleoid-associated protein Ccur92_18190 (Campylobacter curvus (strain 525.92)).